We begin with the raw amino-acid sequence, 248 residues long: Ribonuclease HII (248 aa).

Residues 29 to 219 (DIVCGVDEAG…VREAHLRLGT (191 aa)) enclose the RNase H type-2 domain. A divalent metal cation contacts are provided by Asp-35, Glu-36, and Asp-128.

It belongs to the RNase HII family. It depends on Mn(2+) as a cofactor. Requires Mg(2+) as cofactor.

The protein resides in the cytoplasm. It carries out the reaction Endonucleolytic cleavage to 5'-phosphomonoester.. Functionally, endonuclease that specifically degrades the RNA of RNA-DNA hybrids. The protein is Ribonuclease HII of Paraburkholderia xenovorans (strain LB400).